We begin with the raw amino-acid sequence, 219 residues long: MAIFSVYVVNKAGGLIYQWDSYSPRAEAEKTFSYPLDLLLKLHDERVLVAFGQRDGIRVGHAVLAINGMDVNGKYTADGKEVLEYLGNPANYPVSIRFGRPRLTSNEKLMLASMFHSLFAIGSQLSPEQGSSGIEMLETDTFKLHCFQTLTGIKFVVLADPRQAGIDSLLRKIYEIYSDFALKNPFYSLEMPIRCELFDQNLKLALEVAEKAGTFGPGS.

The protein belongs to the TRAPP small subunits family. TRAPPC4 subfamily. In terms of assembly, component of the multisubunit TRAPP (transport protein particle) complex, which includes at least TRAPPC2, TRAPPC2L, TRAPPC3, TRAPPC3L, TRAPPC4, TRAPPC5, TRAPPC8, TRAPPC9, TRAPPC10, TRAPPC11 and TRAPPC12. Interacts with SDC2. As to expression, widely expressed.

It is found in the postsynaptic cell membrane. The protein localises to the golgi apparatus membrane. It localises to the endoplasmic reticulum. Its subcellular location is the vesicle. Functionally, core component of the TRAPP complexes which has a function of guanine nucleotide exchange factor activity for Rab1 GTPase. Plays a role in vesicular transport from endoplasmic reticulum to Golgi and autophagy. May play a role in dendrite postsynaptic membrane trafficking. This Mus musculus (Mouse) protein is Trafficking protein particle complex subunit 4.